The sequence spans 281 residues: Diaminopimelate epimerase (281 aa).

Asn-13, Gln-46, and Asn-66 together coordinate substrate. Residue Cys-75 is the Proton donor of the active site. Residues 76 to 77 (GN), Asn-160, Asn-193, and 211 to 212 (ER) each bind substrate. Cys-220 serves as the catalytic Proton acceptor. Position 221 to 222 (221 to 222 (GT)) interacts with substrate.

It belongs to the diaminopimelate epimerase family. In terms of assembly, homodimer.

It is found in the cytoplasm. The catalysed reaction is (2S,6S)-2,6-diaminopimelate = meso-2,6-diaminopimelate. It participates in amino-acid biosynthesis; L-lysine biosynthesis via DAP pathway; DL-2,6-diaminopimelate from LL-2,6-diaminopimelate: step 1/1. Catalyzes the stereoinversion of LL-2,6-diaminopimelate (L,L-DAP) to meso-diaminopimelate (meso-DAP), a precursor of L-lysine and an essential component of the bacterial peptidoglycan. This chain is Diaminopimelate epimerase, found in Acinetobacter baylyi (strain ATCC 33305 / BD413 / ADP1).